The primary structure comprises 276 residues: UPF0761 membrane protein APL_1950 (276 aa).

A run of 7 helical transmembrane segments spans residues 33-53 (TLAI…FPIF), 90-110 (MGIV…QSID), 125-145 (IFIS…LAGG), 147-167 (IAIS…LLSF), 171-191 (LLQY…YWLV), 203-223 (LGAI…VWYI), and 239-259 (LPIM…GGLI).

It belongs to the UPF0761 family.

The protein resides in the cell inner membrane. This is UPF0761 membrane protein APL_1950 from Actinobacillus pleuropneumoniae serotype 5b (strain L20).